The following is a 40-amino-acid chain: Photosystem II reaction center protein J (40 aa).

The chain crosses the membrane as a helical span at residues 8-28 (IPLWLISTVTGTLVIGLMGIF).

This sequence belongs to the PsbJ family. In terms of assembly, PSII is composed of 1 copy each of membrane proteins PsbA, PsbB, PsbC, PsbD, PsbE, PsbF, PsbH, PsbI, PsbJ, PsbK, PsbL, PsbM, PsbT, PsbX, PsbY, PsbZ, Psb30/Ycf12, at least 3 peripheral proteins of the oxygen-evolving complex and a large number of cofactors. It forms dimeric complexes.

It is found in the plastid. The protein resides in the chloroplast thylakoid membrane. Its function is as follows. One of the components of the core complex of photosystem II (PSII). PSII is a light-driven water:plastoquinone oxidoreductase that uses light energy to abstract electrons from H(2)O, generating O(2) and a proton gradient subsequently used for ATP formation. It consists of a core antenna complex that captures photons, and an electron transfer chain that converts photonic excitation into a charge separation. The sequence is that of Photosystem II reaction center protein J from Ginkgo biloba (Ginkgo).